The primary structure comprises 192 residues: Protein GrpE (192 aa).

The interval methionine 1 to glycine 34 is disordered. The span at alanine 21–threonine 31 shows a compositional bias: polar residues.

This sequence belongs to the GrpE family. In terms of assembly, homodimer.

It is found in the cytoplasm. In terms of biological role, participates actively in the response to hyperosmotic and heat shock by preventing the aggregation of stress-denatured proteins, in association with DnaK and GrpE. It is the nucleotide exchange factor for DnaK and may function as a thermosensor. Unfolded proteins bind initially to DnaJ; upon interaction with the DnaJ-bound protein, DnaK hydrolyzes its bound ATP, resulting in the formation of a stable complex. GrpE releases ADP from DnaK; ATP binding to DnaK triggers the release of the substrate protein, thus completing the reaction cycle. Several rounds of ATP-dependent interactions between DnaJ, DnaK and GrpE are required for fully efficient folding. The sequence is that of Protein GrpE from Yersinia enterocolitica serotype O:8 / biotype 1B (strain NCTC 13174 / 8081).